The following is a 275-amino-acid chain: Dermonecrotic toxin SpaSicTox-betaIIA1 (275 aa).

Residue His-5 is part of the active site. The Mg(2+) site is built by Glu-25 and Asp-27. His-41 serves as the catalytic Nucleophile. 2 disulfides stabilise this stretch: Cys-45/Cys-51 and Cys-47/Cys-190. Asp-85 is a binding site for Mg(2+).

This sequence belongs to the arthropod phospholipase D family. Class II subfamily. Requires Mg(2+) as cofactor. Expressed by the venom gland.

It localises to the secreted. It catalyses the reaction an N-(acyl)-sphingosylphosphocholine = an N-(acyl)-sphingosyl-1,3-cyclic phosphate + choline. It carries out the reaction an N-(acyl)-sphingosylphosphoethanolamine = an N-(acyl)-sphingosyl-1,3-cyclic phosphate + ethanolamine. The enzyme catalyses a 1-acyl-sn-glycero-3-phosphocholine = a 1-acyl-sn-glycero-2,3-cyclic phosphate + choline. The catalysed reaction is a 1-acyl-sn-glycero-3-phosphoethanolamine = a 1-acyl-sn-glycero-2,3-cyclic phosphate + ethanolamine. In terms of biological role, dermonecrotic toxins cleave the phosphodiester linkage between the phosphate and headgroup of certain phospholipids (sphingolipid and lysolipid substrates), forming an alcohol (often choline) and a cyclic phosphate. This toxin acts on sphingomyelin (SM). It may also act on ceramide phosphoethanolamine (CPE), lysophosphatidylcholine (LPC) and lysophosphatidylethanolamine (LPE), but not on lysophosphatidylserine (LPS), and lysophosphatidylglycerol (LPG). It acts by transphosphatidylation, releasing exclusively cyclic phosphate products as second products. Induces dermonecrosis, hemolysis, increased vascular permeability, edema, inflammatory response, and platelet aggregation. In Sicarius patagonicus (Six-eyed sand spider), this protein is Dermonecrotic toxin SpaSicTox-betaIIA1.